Here is a 683-residue protein sequence, read N- to C-terminus: ATP-dependent zinc metalloprotease FtsH (683 aa).

The disordered stretch occupies residues 1 to 43 (MEDKNIKDDEILDDQNDNQEDVQNQDEEKEIKPKKPKKKVYIS). The Cytoplasmic portion of the chain corresponds to 1–70 (MEDKNIKDDE…KNNNISFRVK (70 aa)). Residues 10 to 28 (EILDDQNDNQEDVQNQDEE) show a composition bias toward acidic residues. The chain crosses the membrane as a helical span at residues 71–91 (PPIFFFLILILMSTLFYFYGN). Over 92–174 (KTALFQEKRE…IVVLGTPVSS (83 aa)) the chain is Periplasmic. The chain crosses the membrane as a helical span at residues 175–195 (IITRAIFSFAPLFMLLFFFYF). The Cytoplasmic segment spans residues 196–683 (INKKMMGSSG…LDDEQLEKYY (488 aa)). 270–277 (GEPGTGKT) contacts ATP. Residue H494 participates in Zn(2+) binding. The active site involves E495. The Zn(2+) site is built by H498 and D569.

It in the central section; belongs to the AAA ATPase family. The protein in the C-terminal section; belongs to the peptidase M41 family. Homohexamer. Requires Zn(2+) as cofactor.

It localises to the cell inner membrane. Acts as a processive, ATP-dependent zinc metallopeptidase for both cytoplasmic and membrane proteins. Plays a role in the quality control of integral membrane proteins. In Streptobacillus moniliformis (strain ATCC 14647 / DSM 12112 / NCTC 10651 / 9901), this protein is ATP-dependent zinc metalloprotease FtsH.